A 356-amino-acid polypeptide reads, in one-letter code: NADH-quinone oxidoreductase subunit H (356 aa).

A run of 8 helical transmembrane segments spans residues 18-38, 87-107, 120-140, 166-186, 202-222, 265-285, 292-312, and 328-348; these read IVMV…IAYI, GVFL…WAVI, VGIL…IMAG, IGFV…SAIV, WLTF…VFYV, AITT…LPPI, WVPG…LFAM, and LGWK…AGVL.

This sequence belongs to the complex I subunit 1 family. In terms of assembly, NDH-1 is composed of 14 different subunits. Subunits NuoA, H, J, K, L, M, N constitute the membrane sector of the complex.

The protein localises to the cell inner membrane. It carries out the reaction a quinone + NADH + 5 H(+)(in) = a quinol + NAD(+) + 4 H(+)(out). In terms of biological role, NDH-1 shuttles electrons from NADH, via FMN and iron-sulfur (Fe-S) centers, to quinones in the respiratory chain. The immediate electron acceptor for the enzyme in this species is believed to be ubiquinone. Couples the redox reaction to proton translocation (for every two electrons transferred, four hydrogen ions are translocated across the cytoplasmic membrane), and thus conserves the redox energy in a proton gradient. This subunit may bind ubiquinone. This chain is NADH-quinone oxidoreductase subunit H, found in Nitrobacter hamburgensis (strain DSM 10229 / NCIMB 13809 / X14).